Reading from the N-terminus, the 318-residue chain is Tyrosine recombinase XerC (318 aa).

The Core-binding (CB) domain maps to 17–108 (PEVMAERRRW…GLRSFLRYLE (92 aa)). One can recognise a Tyr recombinase domain in the interval 129 to 312 (SLPKALTDRE…DSARLLEIYD (184 aa)). Catalysis depends on residues arginine 172, lysine 196, histidine 264, arginine 267, and histidine 290. Tyrosine 299 serves as the catalytic O-(3'-phospho-DNA)-tyrosine intermediate.

It belongs to the 'phage' integrase family. XerC subfamily. In terms of assembly, forms a cyclic heterotetrameric complex composed of two molecules of XerC and two molecules of XerD.

The protein localises to the cytoplasm. In terms of biological role, site-specific tyrosine recombinase, which acts by catalyzing the cutting and rejoining of the recombining DNA molecules. The XerC-XerD complex is essential to convert dimers of the bacterial chromosome into monomers to permit their segregation at cell division. It also contributes to the segregational stability of plasmids. This chain is Tyrosine recombinase XerC, found in Rhizobium meliloti (strain 1021) (Ensifer meliloti).